A 272-amino-acid polypeptide reads, in one-letter code: Glycerol-3-phosphate acyltransferase (272 aa).

A run of 6 helical transmembrane segments spans residues 9–29 (IIIL…GILI), 60–80 (AIVM…CLLI), 99–119 (VIIY…CFYF), 149–169 (ASIS…ICLI), 173–193 (VSLA…IPHL), and 226–246 (LNWW…VLVI).

Belongs to the PlsY family. Probably interacts with PlsX.

The protein localises to the cell membrane. It catalyses the reaction an acyl phosphate + sn-glycerol 3-phosphate = a 1-acyl-sn-glycero-3-phosphate + phosphate. Its pathway is lipid metabolism; phospholipid metabolism. Functionally, catalyzes the transfer of an acyl group from acyl-phosphate (acyl-PO(4)) to glycerol-3-phosphate (G3P) to form lysophosphatidic acid (LPA). This enzyme utilizes acyl-phosphate as fatty acyl donor, but not acyl-CoA or acyl-ACP. The chain is Glycerol-3-phosphate acyltransferase from Malacoplasma penetrans (strain HF-2) (Mycoplasma penetrans).